The primary structure comprises 266 residues: Vitamin B12-binding protein (266 aa).

The first 22 residues, 1-22 (MAKSLFRALVALSFLAPLWLNA), serve as a signal peptide directing secretion. One can recognise a Fe/B12 periplasmic-binding domain in the interval 25 to 266 (RVITLSPANT…QLCNALSQVD (242 aa)). Residues Tyr50 and 242–246 (DWFER) each bind cyanocob(III)alamin. A disulfide bridge links Cys183 with Cys259.

Belongs to the BtuF family. As to quaternary structure, the complex is composed of two ATP-binding proteins (BtuD), two transmembrane proteins (BtuC) and a solute-binding protein (BtuF).

It is found in the periplasm. Functionally, part of the ABC transporter complex BtuCDF involved in vitamin B12 import. Binds vitamin B12 and delivers it to the periplasmic surface of BtuC. The polypeptide is Vitamin B12-binding protein (Escherichia coli O6:H1 (strain CFT073 / ATCC 700928 / UPEC)).